A 1293-amino-acid chain; its full sequence is Putative DNA-directed RNA polymerase 008R (1293 aa).

Residues Cys61, Cys64, Cys71, His74, Cys99, Cys102, and Cys123 each coordinate Zn(2+). The DNA-binding element occupies 270-339 (TNRKPMAGIK…PVMVTPFNVS (70 aa)). Over residues 354–376 (EMRDGTVHRPSEWRPSHGDHMET) the composition is skewed to basic and acidic residues. The disordered stretch occupies residues 354-390 (EMRDGTVHRPSEWRPSHGDHMETADGSPLGRVTRPSY). Mg(2+)-binding residues include Asp474, Asp476, and Asp478. The segment at 724-734 (GQQYVGGSRPG) is alpha-amanitin binding. The segment at 776–788 (PREVFFHAKSGRE) is bridging helix.

It belongs to the RNA polymerase beta' chain family.

The catalysed reaction is RNA(n) + a ribonucleoside 5'-triphosphate = RNA(n+1) + diphosphate. Functionally, component of the DNA-dependent RNA polymerase that catalyzes the transcription of DNA into RNA using the four ribonucleoside triphosphates as substrates. Largest and catalytic component of RNA polymerase II which synthesizes mRNA precursors and many functional non-coding RNAs. Forms the polymerase active center together with the second largest subunit. The sequence is that of Putative DNA-directed RNA polymerase 008R from Frog virus 3 (isolate Goorha) (FV-3).